A 365-amino-acid polypeptide reads, in one-letter code: Cobalt-precorrin-5B C(1)-methyltransferase (365 aa).

Belongs to the CbiD family.

The enzyme catalyses Co-precorrin-5B + S-adenosyl-L-methionine = Co-precorrin-6A + S-adenosyl-L-homocysteine. It functions in the pathway cofactor biosynthesis; adenosylcobalamin biosynthesis; cob(II)yrinate a,c-diamide from sirohydrochlorin (anaerobic route): step 6/10. Catalyzes the methylation of C-1 in cobalt-precorrin-5B to form cobalt-precorrin-6A. The protein is Cobalt-precorrin-5B C(1)-methyltransferase of Clostridium perfringens (strain 13 / Type A).